The following is a 734-amino-acid chain: Photosystem I P700 chlorophyll a apoprotein A2 (734 aa).

Transmembrane regions (helical) follow at residues Ile-46–Ala-69, Leu-135–Gln-158, Leu-175–Ile-199, Met-273–Tyr-291, Leu-330–Tyr-353, Ala-369–Ile-395, Ala-417–His-439, and Phe-517–Val-535. Cys-559 and Cys-568 together coordinate [4Fe-4S] cluster. 2 helical membrane-spanning segments follow: residues Ala-575 to Trp-596 and Leu-643 to Ile-665. Positions 654, 662, and 670 each coordinate chlorophyll a. A phylloquinone-binding site is contributed by Trp-671. A helical membrane pass occupies residues Leu-707–Ala-727.

It belongs to the PsaA/PsaB family. The PsaA/B heterodimer binds the P700 chlorophyll special pair and subsequent electron acceptors. PSI consists of a core antenna complex that captures photons, and an electron transfer chain that converts photonic excitation into a charge separation. The eukaryotic PSI reaction center is composed of at least 11 subunits. It depends on P700 is a chlorophyll a/chlorophyll a' dimer, A0 is one or more chlorophyll a, A1 is one or both phylloquinones and FX is a shared 4Fe-4S iron-sulfur center. as a cofactor.

Its subcellular location is the plastid. It localises to the chloroplast thylakoid membrane. The catalysed reaction is reduced [plastocyanin] + hnu + oxidized [2Fe-2S]-[ferredoxin] = oxidized [plastocyanin] + reduced [2Fe-2S]-[ferredoxin]. PsaA and PsaB bind P700, the primary electron donor of photosystem I (PSI), as well as the electron acceptors A0, A1 and FX. PSI is a plastocyanin-ferredoxin oxidoreductase, converting photonic excitation into a charge separation, which transfers an electron from the donor P700 chlorophyll pair to the spectroscopically characterized acceptors A0, A1, FX, FA and FB in turn. Oxidized P700 is reduced on the lumenal side of the thylakoid membrane by plastocyanin. This chain is Photosystem I P700 chlorophyll a apoprotein A2, found in Populus alba (White poplar).